We begin with the raw amino-acid sequence, 218 residues long: Probable septum site-determining protein MinC (218 aa).

This sequence belongs to the MinC family. In terms of assembly, interacts with MinD and FtsZ.

Its function is as follows. Cell division inhibitor that blocks the formation of polar Z ring septums. Rapidly oscillates between the poles of the cell to destabilize FtsZ filaments that have formed before they mature into polar Z rings. Prevents FtsZ polymerization. This chain is Probable septum site-determining protein MinC, found in Moorella thermoacetica (strain ATCC 39073 / JCM 9320).